The primary structure comprises 97 residues: Exodeoxyribonuclease 7 small subunit (97 aa).

A disordered region spans residues 1 to 22 (MAKTASPGDTAAGNGTEPLPDK).

Belongs to the XseB family. As to quaternary structure, heterooligomer composed of large and small subunits.

It is found in the cytoplasm. It catalyses the reaction Exonucleolytic cleavage in either 5'- to 3'- or 3'- to 5'-direction to yield nucleoside 5'-phosphates.. Functionally, bidirectionally degrades single-stranded DNA into large acid-insoluble oligonucleotides, which are then degraded further into small acid-soluble oligonucleotides. The chain is Exodeoxyribonuclease 7 small subunit from Burkholderia vietnamiensis (strain G4 / LMG 22486) (Burkholderia cepacia (strain R1808)).